The chain runs to 329 residues: Malate dehydrogenase (329 aa).

12–18 (GAAGQIG) serves as a coordination point for NAD(+). R93 and R99 together coordinate substrate. Residues N106, Q113, and 130–132 (VGN) contribute to the NAD(+) site. Residues N132 and R163 each contribute to the substrate site. The Proton acceptor role is filled by H188.

Belongs to the LDH/MDH superfamily. MDH type 2 family.

It catalyses the reaction (S)-malate + NAD(+) = oxaloacetate + NADH + H(+). Its function is as follows. Catalyzes the reversible oxidation of malate to oxaloacetate. The chain is Malate dehydrogenase from Frankia alni (strain DSM 45986 / CECT 9034 / ACN14a).